Consider the following 421-residue polypeptide: Vinorine synthase (421 aa).

Catalysis depends on proton acceptor residues His-160 and Asp-362.

The protein belongs to the plant acyltransferase family. In terms of assembly, monomer. Mainly expressed in roots and, to a lower level, in leaves.

It carries out the reaction 16-epivellosimine + acetyl-CoA = vinorine + CoA. It functions in the pathway alkaloid biosynthesis; ajmaline biosynthesis. With respect to regulation, complete inhibition by 4-(2-aminoethyl)-benzenesulfonyl fluoride (AEBSF), N-tosyl-L-phenylalanine chloromethylketone (TPCK), Hg(2+) and diethyl-pyrocarbonate (DEPC). 50% inhibition by N-(N-(L-3-trans-carboxirane-2-carbonyl)-L-leucyl)-agmanitine (E-64), N-alpha-p-tosyl-L-lysine chloromethylketone (TLCK) and phenylmethylsulfonyl fluoride (PMSF). In terms of biological role, acetyltransferase involved in the biosynthesis of ajmaline-type monoterpenoid indole alkaloids (MIAs) natural products, important plant-derived pharmaceuticals used in the therapy of heart disorders. Catalyzes the conversion of 16-epivellosimine to vinorine, precursor of vomilenine, an intermediate chemical in the biosynthesis of ajmaline. Acts on gardneral, but not on polyneuridine aldehyde or N-methylgardneral. The polypeptide is Vinorine synthase (Rauvolfia serpentina (Serpentine wood)).